The sequence spans 139 residues: Nucleoside diphosphate kinase (139 aa).

ATP is bound by residues lysine 11, phenylalanine 59, arginine 87, threonine 93, arginine 104, and asparagine 114. Catalysis depends on histidine 117, which acts as the Pros-phosphohistidine intermediate.

The protein belongs to the NDK family. As to quaternary structure, homotetramer. It depends on Mg(2+) as a cofactor.

Its subcellular location is the cytoplasm. The catalysed reaction is a 2'-deoxyribonucleoside 5'-diphosphate + ATP = a 2'-deoxyribonucleoside 5'-triphosphate + ADP. It carries out the reaction a ribonucleoside 5'-diphosphate + ATP = a ribonucleoside 5'-triphosphate + ADP. Major role in the synthesis of nucleoside triphosphates other than ATP. The ATP gamma phosphate is transferred to the NDP beta phosphate via a ping-pong mechanism, using a phosphorylated active-site intermediate. This is Nucleoside diphosphate kinase from Flavobacterium psychrophilum (strain ATCC 49511 / DSM 21280 / CIP 103535 / JIP02/86).